Reading from the N-terminus, the 231-residue chain is Phosphoglycolate phosphatase, plasmid (231 aa).

Aspartate 14 serves as the catalytic Nucleophile. The Mg(2+) site is built by aspartate 14, aspartate 16, and aspartate 175.

Belongs to the HAD-like hydrolase superfamily. CbbY/CbbZ/Gph/YieH family. As to quaternary structure, homotrimer. It depends on Mg(2+) as a cofactor.

It carries out the reaction 2-phosphoglycolate + H2O = glycolate + phosphate. It participates in organic acid metabolism; glycolate biosynthesis; glycolate from 2-phosphoglycolate: step 1/1. Its function is as follows. Specifically catalyzes the dephosphorylation of 2-phosphoglycolate. Is involved in the dissimilation of the intracellular 2-phosphoglycolate formed during the DNA repair of 3'-phosphoglycolate ends, a major class of DNA lesions induced by oxidative stress. The sequence is that of Phosphoglycolate phosphatase, plasmid (cbbZP) from Cupriavidus necator (strain ATCC 17699 / DSM 428 / KCTC 22496 / NCIMB 10442 / H16 / Stanier 337) (Ralstonia eutropha).